We begin with the raw amino-acid sequence, 547 residues long: MARYIFITGGVVSSLGKGLASAALGALLQARGFSVRLRKLDPYLNVDPGTMSPFEHGEVFVTDDGAETDLDLGHYERFTGVAARSTDSVSSGRIYSTVLEKERRGDYLGKTIQVIPHVTNEIKDFIAIGDDEVDFMLCEIGGTVGDIEGLPFFEAIRQFTHDKPRGQCIFMHLTLLPYLAASGELKTKPTQHSVKELQSIGIAPDILVCRSEHPIPEKEREKIALFCNVRKEAVVAAYDLKTIYDAPLAYHEQGLDQAVLDAFDISPAPKPDLTVWRDVSDRVHNPEGEVKVAIVGKYTQLEDAYKSIAEALTHGGMANRVKVIVEWVDAEVFDTQDVAPHLEGFHAILVPGGFGERGTEGKIKAAQYAREHNVPYLGICLGMQMAVIEAARNVANIKAAGSEEFDHEAGKKRFEPVVYHLKEWVQGNAKVSRRVGDDKGGTMRLGAYDAALTPGTRVADIYHTSAIDERHRHRYEVDIKYRAQLEDAGLVFSGMSPDGKLPEIIEWPNHPWFIGVQFHPELKSKPFDPHPLFADFIRAAKENSRLV.

The amidoligase domain stretch occupies residues 1–265 (MARYIFITGG…DQAVLDAFDI (265 aa)). Serine 13 contacts CTP. A UTP-binding site is contributed by serine 13. Residues 14 to 19 (SLGKGL) and aspartate 71 contribute to the ATP site. Mg(2+) contacts are provided by aspartate 71 and glutamate 139. CTP-binding positions include 146 to 148 (DIE), 186 to 191 (KTKPTQ), and lysine 222. UTP is bound by residues 186–191 (KTKPTQ) and lysine 222. One can recognise a Glutamine amidotransferase type-1 domain in the interval 291–546 (KVAIVGKYTQ…IRAAKENSRL (256 aa)). Glycine 353 lines the L-glutamine pocket. Cysteine 380 (nucleophile; for glutamine hydrolysis) is an active-site residue. Residues 381–384 (LGMQ), glutamate 404, and arginine 474 contribute to the L-glutamine site. Active-site residues include histidine 519 and glutamate 521.

It belongs to the CTP synthase family. As to quaternary structure, homotetramer.

It catalyses the reaction UTP + L-glutamine + ATP + H2O = CTP + L-glutamate + ADP + phosphate + 2 H(+). It carries out the reaction L-glutamine + H2O = L-glutamate + NH4(+). The catalysed reaction is UTP + NH4(+) + ATP = CTP + ADP + phosphate + 2 H(+). It functions in the pathway pyrimidine metabolism; CTP biosynthesis via de novo pathway; CTP from UDP: step 2/2. With respect to regulation, allosterically activated by GTP, when glutamine is the substrate; GTP has no effect on the reaction when ammonia is the substrate. The allosteric effector GTP functions by stabilizing the protein conformation that binds the tetrahedral intermediate(s) formed during glutamine hydrolysis. Inhibited by the product CTP, via allosteric rather than competitive inhibition. Functionally, catalyzes the ATP-dependent amination of UTP to CTP with either L-glutamine or ammonia as the source of nitrogen. Regulates intracellular CTP levels through interactions with the four ribonucleotide triphosphates. This chain is CTP synthase, found in Roseobacter denitrificans (strain ATCC 33942 / OCh 114) (Erythrobacter sp. (strain OCh 114)).